The chain runs to 189 residues: Nucleoside triphosphate pyrophosphatase (189 aa).

Residue Asp70 is the Proton acceptor of the active site.

The protein belongs to the Maf family. A divalent metal cation is required as a cofactor.

The protein localises to the cytoplasm. It carries out the reaction a ribonucleoside 5'-triphosphate + H2O = a ribonucleoside 5'-phosphate + diphosphate + H(+). It catalyses the reaction a 2'-deoxyribonucleoside 5'-triphosphate + H2O = a 2'-deoxyribonucleoside 5'-phosphate + diphosphate + H(+). Its function is as follows. Nucleoside triphosphate pyrophosphatase. May have a dual role in cell division arrest and in preventing the incorporation of modified nucleotides into cellular nucleic acids. This Xylella fastidiosa (strain M23) protein is Nucleoside triphosphate pyrophosphatase.